Here is a 424-residue protein sequence, read N- to C-terminus: Synaptotagmin-1 (424 aa).

Residues 1-60 are Vesicular-facing; the sequence is MVSESHHEALAAPPATTVAAALPSNVTEPAAPGGGGGKEDAFSNLKKKFMNELNKIPLPP. The N-linked (GlcNAc...) asparagine glycan is linked to Asn25. The chain crosses the membrane as a helical span at residues 61–82; it reads WALIAIAIVAVLLILTCCFCLC. S-palmitoyl cysteine attachment occurs at residues Cys77, Cys78, Cys80, Cys82, and Cys85. Residues 83–424 lie on the Cytoplasmic side of the membrane; that stretch reads KKCLFKKKNK…EVDAMLAVKK (342 aa). Residues 117 to 142 are disordered; it reads KDQALKDDDAETGLTDGEEKEEPKEV. Residues 124-136 are compositionally biased toward acidic residues; sequence DDAETGLTDGEEK. The tract at residues 138–384 is phospholipid binding; the sequence is EPKEVEKLGK…AIGKVFVGYN (247 aa). 2 consecutive C2 domains span residues 144–263 and 275–408; these read KLGK…EEWR and KLGD…AQWH. Positions 174, 175, 181, 233, 234, 235, 238, 239, 241, 306, 312, 366, 368, and 374 each coordinate Ca(2+).

Belongs to the synaptotagmin family. In terms of assembly, homotetramer. Ca(2+) serves as cofactor.

The protein localises to the cytoplasmic vesicle. Its subcellular location is the secretory vesicle membrane. It is found in the secretory vesicle. The protein resides in the synaptic vesicle membrane. It localises to the chromaffin granule membrane. The protein localises to the cytoplasm. Functionally, calcium sensor that participates in triggering neurotransmitter release at the synapse. May have a regulatory role in the membrane interactions during trafficking of synaptic vesicles at the active zone of the synapse. It binds acidic phospholipids with a specificity that requires the presence of both an acidic head group and a diacyl backbone. May play a role in dendrite formation by melanocytes. The chain is Synaptotagmin-1 (SYT1) from Gallus gallus (Chicken).